The primary structure comprises 162 residues: MHNMFPALTKTLSLQGYKIINSQTGSAAWSCGRRWFSSDKDDHDDVVTRIKISPIKRTNEPLDKKRARLIYQSRKRGILETDLLLSGFAAKYLKKMNEEELEEYDSLLNELDWDIYYWATKNFKTSPLPDKWANSKLLKQLQEFSENKEKEILSMPDLSKYQ.

The N-terminal 35 residues, 1 to 35 (MHNMFPALTKTLSLQGYKIINSQTGSAAWSCGRRW), are a transit peptide targeting the mitochondrion.

Belongs to the SDHAF2 family. Interacts with the flavoprotein subunit within the SDH catalytic dimer.

It localises to the mitochondrion matrix. Plays an essential role in the assembly of succinate dehydrogenase (SDH), an enzyme complex (also referred to as respiratory complex II) that is a component of both the tricarboxylic acid (TCA) cycle and the mitochondrial electron transport chain, and which couples the oxidation of succinate to fumarate with the reduction of ubiquinone (coenzyme Q) to ubiquinol. Required for flavinylation (covalent attachment of FAD) of the flavoprotein subunit of the SDH catalytic dimer. The polypeptide is Succinate dehydrogenase assembly factor 2, mitochondrial (Saccharomyces cerevisiae (strain RM11-1a) (Baker's yeast)).